The chain runs to 644 residues: Archaeal Lon protease (644 aa).

Over residues 1 to 18 the composition is skewed to polar residues; the sequence is MKTTIKNSRTQESVSYEG. Residues 1-30 are disordered; that stretch reads MKTTIKNSRTQESVSYEGNETKKGTGETLS. The Cytoplasmic segment spans residues 1-137; the sequence is MKTTIKNSRT…KARSQDEKKN (137 aa). 71–78 serves as a coordination point for ATP; the sequence is GEPGVGKS. The next 2 helical transmembrane spans lie at 138–155 and 156–171; these read LFMM…FMMN and QFLA…FLAL. At 172-644 the chain is on the cytoplasmic side; that stretch reads QQFRPRTTVM…PSIMKKPAMH (473 aa). The 180-residue stretch at 438–617 folds into the Lon proteolytic domain; sequence GGEVGRVNGL…GDVLEHALIG (180 aa). Residues Ser524 and Lys567 contribute to the active site.

Belongs to the peptidase S16 family. Archaeal LonB subfamily. Homohexamer. Organized in a ring with a central cavity.

Its subcellular location is the cell membrane. In terms of biological role, ATP-dependent serine protease that mediates the selective degradation of mutant and abnormal proteins as well as certain short-lived regulatory proteins. Degrades polypeptides processively. This Methanothermobacter thermautotrophicus (strain ATCC 29096 / DSM 1053 / JCM 10044 / NBRC 100330 / Delta H) (Methanobacterium thermoautotrophicum) protein is Archaeal Lon protease.